Consider the following 124-residue polypeptide: Small ribosomal subunit protein uS12 (124 aa).

Aspartate 89 is subject to 3-methylthioaspartic acid. The tract at residues 104 to 124 (TQGVKNRGQARSRYGAKKEKK) is disordered. A compositionally biased stretch (basic residues) spans 111–124 (GQARSRYGAKKEKK).

The protein belongs to the universal ribosomal protein uS12 family. In terms of assembly, part of the 30S ribosomal subunit. Contacts proteins S8 and S17. May interact with IF1 in the 30S initiation complex.

In terms of biological role, with S4 and S5 plays an important role in translational accuracy. Its function is as follows. Interacts with and stabilizes bases of the 16S rRNA that are involved in tRNA selection in the A site and with the mRNA backbone. Located at the interface of the 30S and 50S subunits, it traverses the body of the 30S subunit contacting proteins on the other side and probably holding the rRNA structure together. The combined cluster of proteins S8, S12 and S17 appears to hold together the shoulder and platform of the 30S subunit. The sequence is that of Small ribosomal subunit protein uS12 from Micrococcus luteus (strain ATCC 4698 / DSM 20030 / JCM 1464 / CCM 169 / CCUG 5858 / IAM 1056 / NBRC 3333 / NCIMB 9278 / NCTC 2665 / VKM Ac-2230) (Micrococcus lysodeikticus).